The following is a 279-amino-acid chain: Putative hydro-lyase GDI0188/Gdia_2258 (279 aa).

It belongs to the D-glutamate cyclase family.

This chain is Putative hydro-lyase GDI0188/Gdia_2258, found in Gluconacetobacter diazotrophicus (strain ATCC 49037 / DSM 5601 / CCUG 37298 / CIP 103539 / LMG 7603 / PAl5).